Consider the following 281-residue polypeptide: 2-dehydro-3-deoxyphosphooctonate aldolase (281 aa).

It belongs to the KdsA family.

It is found in the cytoplasm. It catalyses the reaction D-arabinose 5-phosphate + phosphoenolpyruvate + H2O = 3-deoxy-alpha-D-manno-2-octulosonate-8-phosphate + phosphate. The protein operates within carbohydrate biosynthesis; 3-deoxy-D-manno-octulosonate biosynthesis; 3-deoxy-D-manno-octulosonate from D-ribulose 5-phosphate: step 2/3. It functions in the pathway bacterial outer membrane biogenesis; lipopolysaccharide biosynthesis. This is 2-dehydro-3-deoxyphosphooctonate aldolase from Pseudomonas savastanoi pv. phaseolicola (strain 1448A / Race 6) (Pseudomonas syringae pv. phaseolicola (strain 1448A / Race 6)).